The sequence spans 163 residues: Nucleotide-binding protein CYA_0935 (163 aa).

Belongs to the YajQ family.

Functionally, nucleotide-binding protein. In Synechococcus sp. (strain JA-3-3Ab) (Cyanobacteria bacterium Yellowstone A-Prime), this protein is Nucleotide-binding protein CYA_0935.